Here is a 288-residue protein sequence, read N- to C-terminus: MTALQDMAKAQLVLPAPAKLNLMLHILGRRPDGYHELQTLFQFLDYGDELGFTVREDGEIRLQTDVPGVPHDSNLIVKAARALQKQSGCTLGMDIWLEKRLPMGGGIGGGSSDAATTLLALNHLWQLGWDEDRLAQLGLTLGADVPVFVRGHAAFAEGVGEILTPVDPEEPWYLVLVPQVAVSTAEIFSDPLLTRDTPPIKVRPVPKGNSRNDCKAVVERRYPEVRNALNLLGNFTEAKLTGTGSCVFGAFPNKAEADKVSALLTETLTGFVAKGSNISMLHRKLQIL.

Lys-19 is a catalytic residue. Residue 102–112 (PMGGGIGGGSS) coordinates ATP. The active site involves Asp-144.

This sequence belongs to the GHMP kinase family. IspE subfamily.

The catalysed reaction is 4-CDP-2-C-methyl-D-erythritol + ATP = 4-CDP-2-C-methyl-D-erythritol 2-phosphate + ADP + H(+). It participates in isoprenoid biosynthesis; isopentenyl diphosphate biosynthesis via DXP pathway; isopentenyl diphosphate from 1-deoxy-D-xylulose 5-phosphate: step 3/6. Catalyzes the phosphorylation of the position 2 hydroxy group of 4-diphosphocytidyl-2C-methyl-D-erythritol. The chain is 4-diphosphocytidyl-2-C-methyl-D-erythritol kinase from Pseudomonas savastanoi pv. phaseolicola (strain 1448A / Race 6) (Pseudomonas syringae pv. phaseolicola (strain 1448A / Race 6)).